Here is a 344-residue protein sequence, read N- to C-terminus: DNA-directed RNA polymerase subunit alpha (344 aa).

Positions 1-232 (MGQYTINLRE…HLFLPPFGLE (232 aa)) are alpha N-terminal domain (alpha-NTD). The segment at 270–344 (LIKDQFLEYS…KRFGINLKLK (75 aa)) is alpha C-terminal domain (alpha-CTD).

It belongs to the RNA polymerase alpha chain family. As to quaternary structure, in plastids the minimal PEP RNA polymerase catalytic core is composed of four subunits: alpha, beta, beta', and beta''. When a (nuclear-encoded) sigma factor is associated with the core the holoenzyme is formed, which can initiate transcription.

Its subcellular location is the plastid. The protein localises to the chloroplast. It carries out the reaction RNA(n) + a ribonucleoside 5'-triphosphate = RNA(n+1) + diphosphate. Its function is as follows. DNA-dependent RNA polymerase catalyzes the transcription of DNA into RNA using the four ribonucleoside triphosphates as substrates. The sequence is that of DNA-directed RNA polymerase subunit alpha from Spirogyra maxima (Green alga).